Here is a 61-residue protein sequence, read N- to C-terminus: Small ribosomal subunit protein uS14B (61 aa).

Residues C24, C27, C40, and C43 each contribute to the Zn(2+) site.

Belongs to the universal ribosomal protein uS14 family. Zinc-binding uS14 subfamily. Part of the 30S ribosomal subunit. Contacts proteins S3 and S10. It depends on Zn(2+) as a cofactor.

In terms of biological role, binds 16S rRNA, required for the assembly of 30S particles and may also be responsible for determining the conformation of the 16S rRNA at the A site. The protein is Small ribosomal subunit protein uS14B of Salinispora arenicola (strain CNS-205).